We begin with the raw amino-acid sequence, 197 residues long: Recombination protein RecR (197 aa).

The segment at Cys-56–Cys-71 adopts a C4-type zinc-finger fold. The Toprim domain occupies Ser-79–Pro-174.

This sequence belongs to the RecR family.

Its function is as follows. May play a role in DNA repair. It seems to be involved in an RecBC-independent recombinational process of DNA repair. It may act with RecF and RecO. In Paramagnetospirillum magneticum (strain ATCC 700264 / AMB-1) (Magnetospirillum magneticum), this protein is Recombination protein RecR.